Reading from the N-terminus, the 664-residue chain is DCC-interacting protein 13-beta (664 aa).

Residues 1–428 are required for RAB5A binding; sequence MPAVDKLLLE…NSEMENENDK (428 aa). The BAR domain occupies 3–268; the sequence is AVDKLLLEEA…ESVYTPDSDV (266 aa). Residues 277–375 enclose the PH domain; that stretch reads LIQKAGYLNL…WICAINNISR (99 aa). The PID domain occupies 488–637; sequence SLLQQMFIVR…LMLSIPLTND (150 aa). The disordered stretch occupies residues 643-664; that stretch reads LNDQPDDDDGNPNEHRGAESEA. Over residues 654-664 the composition is skewed to basic and acidic residues; sequence PNEHRGAESEA.

Homodimer. Homotetramer. Binds RAB5A/Rab5 through an N-terminal domain. This interaction is essential for its recruitment to endosomal membranes as well as its role in cell proliferation. Binds subunits of the NuRD/MeCP1 complex. Interacts with FSHR; interaction is independent of follicle stimulating hormone stimulation. Interacts with APPL1; the interaction is decreased by adiponectin in a time-dependent manner. Forms a complex comprising APPL1, RUVBL2, CTNNB1, HDAC1 and HDAC2; interaction reduces interaction between CTNNB1, HDAC1, HDAC2 and RUVBL2 leading to the decrease of deacetylase activity of this complex; affects the recruitment of repressive complexes to the Wnt target genes. Interacts (via BAR domain) with TBC1D1; interaction is dependent of TBC1D1 phosphorylation at 'Ser-235'; interaction diminishes the phosphorylation of TBC1D1 at 'Thr-596', resulting in inhibition of SLC2A4 translocation and glucose uptake. Interacts with ANXA2; targets APPL2 to endosomes and acting in parallel to RAB5A. Interacts with RAB31 (in GTP-bound form); interaction contributes to or enhances recruitment of APPL2 to the phagosomes; interaction enhances Fc-gamma receptor-mediated phagocytosis through PI3K/Akt signaling in macrophages. Interacts with PIK3R1; forms a complex with PIK3R1 and APPL1. Interacts (via BAR domain) with ADIPOR1; hinders the accessibility of APPL1 to ADIPOR1; negatively regulates adiponectin signaling; ADIPOQ dissociates this interaction and facilitates the recruitment of APPL1 to ADIPOR1. Interacts (via BAR domain) with ADIPOR2; ADIPOQ dissociates this interaction. As to expression, high levels in brain, heart, kidney and skeletal muscle.

The protein resides in the early endosome membrane. The protein localises to the nucleus. It is found in the cell membrane. Its subcellular location is the endosome membrane. It localises to the cytoplasm. The protein resides in the cytoplasmic vesicle. The protein localises to the phagosome. It is found in the cell projection. Its subcellular location is the ruffle. It localises to the ruffle membrane. The protein resides in the phagosome membrane. In terms of biological role, multifunctional adapter protein that binds to various membrane receptors, nuclear factors and signaling proteins to regulate many processes, such as cell proliferation, immune response, endosomal trafficking and cell metabolism. Regulates signaling pathway leading to cell proliferation through interaction with RAB5A and subunits of the NuRD/MeCP1 complex. Plays a role in immune response by modulating phagocytosis, inflammatory and innate immune responses. In macrophages, enhances Fc-gamma receptor-mediated phagocytosis through interaction with RAB31 leading to activation of PI3K/Akt signaling. In response to LPS, modulates inflammatory responses by playing a key role on the regulation of TLR4 signaling and in the nuclear translocation of RELA/NF-kappa-B p65 and the secretion of pro- and anti-inflammatory cytokines. Also functions as a negative regulator of innate immune response via inhibition of AKT1 signaling pathway by forming a complex with APPL1 and PIK3R1. Plays a role in endosomal trafficking of TGFBR1 from the endosomes to the nucleus. Plays a role in cell metabolism by regulating adiponecting ans insulin signaling pathways and adaptative thermogenesis. In muscle, negatively regulates adiponectin-simulated glucose uptake and fatty acid oxidation by inhibiting adiponectin signaling pathway through APPL1 sequestration thereby antagonizing APPL1 action. In muscles, negatively regulates insulin-induced plasma membrane recruitment of GLUT4 and glucose uptake through interaction with TBC1D1. Plays a role in cold and diet-induced adaptive thermogenesis by activating ventromedial hypothalamus (VMH) neurons throught AMPK inhibition which enhances sympathetic outflow to subcutaneous white adipose tissue (sWAT), sWAT beiging and cold tolerance. Also plays a role in other signaling pathways namely Wnt/beta-catenin, HGF and glucocorticoid receptor signaling. Positive regulator of beta-catenin/TCF-dependent transcription through direct interaction with RUVBL2/reptin resulting in the relief of RUVBL2-mediated repression of beta-catenin/TCF target genes by modulating the interactions within the beta-catenin-reptin-HDAC complex. May affect adult neurogenesis in hippocampus and olfactory system via regulating the sensitivity of glucocorticoid receptor. Required for fibroblast migration through HGF cell signaling. The protein is DCC-interacting protein 13-beta of Homo sapiens (Human).